A 208-amino-acid chain; its full sequence is Holliday junction resolvase RecU (208 aa).

Mg(2+) contacts are provided by T87, D89, E102, and Q121.

The protein belongs to the RecU family. The cofactor is Mg(2+).

The protein localises to the cytoplasm. The catalysed reaction is Endonucleolytic cleavage at a junction such as a reciprocal single-stranded crossover between two homologous DNA duplexes (Holliday junction).. Its function is as follows. Endonuclease that resolves Holliday junction intermediates in genetic recombination. Cleaves mobile four-strand junctions by introducing symmetrical nicks in paired strands. Promotes annealing of linear ssDNA with homologous dsDNA. Required for DNA repair, homologous recombination and chromosome segregation. The protein is Holliday junction resolvase RecU of Staphylococcus aureus (strain Mu3 / ATCC 700698).